The following is a 108-amino-acid chain: Nucleoid-associated protein Mmwyl1_2533 (108 aa).

The disordered stretch occupies residues 1–22 (MFKGGMGNMMRQAQQMQENMQK). Residues 11–22 (RQAQQMQENMQK) are compositionally biased toward polar residues.

This sequence belongs to the YbaB/EbfC family. Homodimer.

The protein localises to the cytoplasm. It localises to the nucleoid. In terms of biological role, binds to DNA and alters its conformation. May be involved in regulation of gene expression, nucleoid organization and DNA protection. This chain is Nucleoid-associated protein Mmwyl1_2533, found in Marinomonas sp. (strain MWYL1).